The primary structure comprises 247 residues: Proteasome subunit alpha type-7-B (247 aa).

This sequence belongs to the peptidase T1A family. The 26S proteasome consists of a 20S proteasome core and two 19S regulatory subunits. The 20S proteasome core is composed of 28 subunits that are arranged in four stacked rings, resulting in a barrel-shaped structure. The two end rings are each formed by seven alpha subunits, and the two central rings are each formed by seven beta subunits. The catalytic chamber with the active sites is on the inside of the barrel. Post-translationally, phosphorylated in G2 phase.

It is found in the cytoplasm. It localises to the nucleus. In terms of biological role, the proteasome is a multicatalytic proteinase complex which is characterized by its ability to cleave peptides with Arg, Phe, Tyr, Leu, and Glu adjacent to the leaving group at neutral or slightly basic pH. The proteasome has an ATP-dependent proteolytic activity. The sequence is that of Proteasome subunit alpha type-7-B (psma7-b) from Xenopus laevis (African clawed frog).